A 317-amino-acid polypeptide reads, in one-letter code: L-lactate dehydrogenase (317 aa).

Residues valine 17, aspartate 38, lysine 43, tyrosine 69, and 83 to 84 (GA) each bind NAD(+). Residues glutamine 86 and arginine 92 each coordinate substrate. NAD(+) is bound by residues serine 105, 122 to 124 (ATN), and serine 147. A substrate-binding site is contributed by 124–127 (NPVD). 152–155 (DTAR) serves as a coordination point for substrate. Residues arginine 157 and histidine 172 each contribute to the beta-D-fructose 1,6-bisphosphate site. Histidine 179 acts as the Proton acceptor in catalysis. Tyrosine 224 carries the post-translational modification Phosphotyrosine. Threonine 233 contributes to the substrate binding site.

The protein belongs to the LDH/MDH superfamily. LDH family. Homotetramer.

The protein localises to the cytoplasm. The enzyme catalyses (S)-lactate + NAD(+) = pyruvate + NADH + H(+). Its pathway is fermentation; pyruvate fermentation to lactate; (S)-lactate from pyruvate: step 1/1. With respect to regulation, allosterically activated by fructose 1,6-bisphosphate (FBP). Functionally, catalyzes the conversion of lactate to pyruvate. This chain is L-lactate dehydrogenase, found in Bacillus caldolyticus.